A 293-amino-acid chain; its full sequence is MVVSVPATSANLGPGFDCLGLSLNLRNRFFIEPSNIHAVKLVGEGEGIPKFLTNNIFTKVFYEILKKHGNDGSFKFLLHNKVPITRGMGSSSAMIVGAVASAFAFLGFAFDRENILNTALIYENHPDNITPAVFGGYNAAFVEKKKVISLKTKIPSFLKAVMVIPNRVISTKQSRHLLPKRYSVQESVFNLSHASLMTMAIVQGKWDLLRCCSKDRMHQYKRMQTYPVLFAIQKLALENNALMSTLSGSGSSFFNMCYEEDAPKLKQVLSKKFPKFRVAVLDFDNDGVLIEKD.

83 to 93 (PITRGMGSSSA) contacts ATP.

Belongs to the GHMP kinase family. Homoserine kinase subfamily.

Its subcellular location is the cytoplasm. The catalysed reaction is L-homoserine + ATP = O-phospho-L-homoserine + ADP + H(+). Its pathway is amino-acid biosynthesis; L-threonine biosynthesis; L-threonine from L-aspartate: step 4/5. Catalyzes the ATP-dependent phosphorylation of L-homoserine to L-homoserine phosphate. This Helicobacter pylori (strain J99 / ATCC 700824) (Campylobacter pylori J99) protein is Homoserine kinase.